A 335-amino-acid polypeptide reads, in one-letter code: DNA-directed RNA polymerase subunit alpha (335 aa).

The segment at 1 to 233 is alpha N-terminal domain (alpha-NTD); it reads MVREKITVST…DLFIPFLHME (233 aa). Residues 265–335 form an alpha C-terminal domain (alpha-CTD) region; sequence KEIALKSIFI…KQLVIFLPKK (71 aa).

Belongs to the RNA polymerase alpha chain family. In plastids the minimal PEP RNA polymerase catalytic core is composed of four subunits: alpha, beta, beta', and beta''. When a (nuclear-encoded) sigma factor is associated with the core the holoenzyme is formed, which can initiate transcription.

It is found in the plastid. It localises to the chloroplast. It catalyses the reaction RNA(n) + a ribonucleoside 5'-triphosphate = RNA(n+1) + diphosphate. Functionally, DNA-dependent RNA polymerase catalyzes the transcription of DNA into RNA using the four ribonucleoside triphosphates as substrates. The sequence is that of DNA-directed RNA polymerase subunit alpha from Coffea arabica (Arabian coffee).